The following is a 317-amino-acid chain: L-lactate dehydrogenase 1 (317 aa).

Residues valine 17, aspartate 38, lysine 43, tyrosine 69, and 83-84 (GA) each bind NAD(+). Substrate-binding residues include glutamine 86 and arginine 92. NAD(+)-binding positions include serine 105, 122–124 (ATN), and serine 147. 124 to 127 (NPVD) contributes to the substrate binding site. Residue 152–155 (DSAR) coordinates substrate. Residue histidine 179 is the Proton acceptor of the active site. The residue at position 223 (tyrosine 223) is a Phosphotyrosine. Threonine 232 contacts substrate.

This sequence belongs to the LDH/MDH superfamily. LDH family. As to quaternary structure, homotetramer.

It localises to the cytoplasm. The enzyme catalyses (S)-lactate + NAD(+) = pyruvate + NADH + H(+). It functions in the pathway fermentation; pyruvate fermentation to lactate; (S)-lactate from pyruvate: step 1/1. Functionally, catalyzes the conversion of lactate to pyruvate (Potential). Appears to be the primary factor that allows S.aureus growth during nitrosative stress in both aerobically and anaerobically cultured cells. The chain is L-lactate dehydrogenase 1 from Staphylococcus aureus (strain USA300).